A 100-amino-acid chain; its full sequence is Urease subunit gamma (100 aa).

The protein belongs to the urease gamma subunit family. Heterotrimer of UreA (gamma), UreB (beta) and UreC (alpha) subunits. Three heterotrimers associate to form the active enzyme.

It is found in the cytoplasm. The catalysed reaction is urea + 2 H2O + H(+) = hydrogencarbonate + 2 NH4(+). Its pathway is nitrogen metabolism; urea degradation; CO(2) and NH(3) from urea (urease route): step 1/1. The chain is Urease subunit gamma from Actinobacillus pleuropneumoniae (Haemophilus pleuropneumoniae).